A 201-amino-acid chain; its full sequence is Outer-membrane lipoprotein LolB (201 aa).

An N-terminal signal peptide occupies residues 1-18; that stretch reads MKWCRLSIILMSLILLAG. The N-palmitoyl cysteine moiety is linked to residue Cys-19. A lipid anchor (S-diacylglycerol cysteine) is attached at Cys-19.

Belongs to the LolB family. Monomer.

The protein resides in the cell outer membrane. Its function is as follows. Plays a critical role in the incorporation of lipoproteins in the outer membrane after they are released by the LolA protein. This is Outer-membrane lipoprotein LolB from Nitrosococcus oceani (strain ATCC 19707 / BCRC 17464 / JCM 30415 / NCIMB 11848 / C-107).